The primary structure comprises 207 residues: Cytidylate kinase (207 aa).

7–15 (GVAASGKSS) is a binding site for ATP.

Belongs to the cytidylate kinase family. Type 1 subfamily.

Its subcellular location is the cytoplasm. It carries out the reaction CMP + ATP = CDP + ADP. The catalysed reaction is dCMP + ATP = dCDP + ADP. The chain is Cytidylate kinase from Deinococcus deserti (strain DSM 17065 / CIP 109153 / LMG 22923 / VCD115).